The primary structure comprises 560 residues: Protein tweety homolog 3 (560 aa).

Residues 1-43 (MAAVVNYSPPWWVNLFHRLPHFNLQFQQTSSDFRPDDSDYQKA) lie on the Extracellular side of the membrane. Residues 44 to 64 (VLLLGAAALVCLALDLLFLLF) form a helical membrane-spanning segment. The Cytoplasmic portion of the chain corresponds to 65–87 (YSFWLCCCRRKNHDSPNADCCCT). The chain crosses the membrane as a helical span at residues 88–108 (AWCVIIATLVCSAGIAVGFYG). Topologically, residues 109 to 212 (NGETCDGVTR…TEQYDWYRWL (104 aa)) are extracellular. Residues Glu-111 and Asp-114 each contribute to the Ca(2+) site. N-linked (GlcNAc...) asparagine glycosylation is found at Asn-127 and Asn-145. The chain crosses the membrane as a helical span at residues 213-233 (GYLGLLLFDVIICLLVLVGLI). Residues 234 to 238 (RNSRS) lie on the Cytoplasmic side of the membrane. The helical transmembrane segment at 239 to 259 (ILIGVCFLGVLTLVISWASLG) threads the bilayer. Topologically, residues 260–387 (LEFSFAVGAS…LTGLCYDGVE (128 aa)) are extracellular. Disulfide bonds link Cys-272–Cys-382 and Cys-300–Cys-367. Residue Asn-352 is glycosylated (N-linked (GlcNAc...) asparagine). The chain crosses the membrane as a helical span at residues 388–408 (GLIYLVLFSFVTALMFSSIVC). Over 409 to 560 (SVPHTWQSKR…AIHRPHSAIH (152 aa)) the chain is Cytoplasmic. Disordered stretches follow at residues 415 to 435 (QSKRSEEEDGDETSATLGSRA) and 486 to 560 (TPRC…SAIH). Polar residues predominate over residues 539–549 (TSRSAPNSRPN).

This sequence belongs to the tweety family. Homotetramer; disulfide-linked. Forms cis-homodimers in the presence of Ca(2+).

It is found in the cell membrane. It catalyses the reaction chloride(in) = chloride(out). It carries out the reaction L-glutamate(out) = L-glutamate(in). May act as a calcium-independent, swelling-dependent volume-regulated anion channel (VRAC-swell) which plays a pivotal role in the process of regulatory volume decrease (RVD) in the brain through the efflux of anions like chloride and organic osmolytes like glutamate. Probable large-conductance Ca(2+)-activated chloride channel. The polypeptide is Protein tweety homolog 3 (ttyh3b) (Danio rerio (Zebrafish)).